Consider the following 122-residue polypeptide: Fluoride-specific ion channel FluC (122 aa).

Helical transmembrane passes span 4-24 (LLIA…GTAI), 34-54 (IGTM…MTLL), 66-86 (LALV…EWET), and 95-115 (FWIG…AVWF). Na(+) is bound by residues Gly74 and Thr77.

Belongs to the fluoride channel Fluc/FEX (TC 1.A.43) family.

The protein resides in the cell inner membrane. It carries out the reaction fluoride(in) = fluoride(out). Na(+) is not transported, but it plays an essential structural role and its presence is essential for fluoride channel function. Functionally, fluoride-specific ion channel. Important for reducing fluoride concentration in the cell, thus reducing its toxicity. This Solibacter usitatus (strain Ellin6076) protein is Fluoride-specific ion channel FluC.